The chain runs to 1364 residues: Toxin subunit YenA2 (1364 aa).

A coiled-coil region spans residues 1025 to 1080 (SESYRRRRQEWELQYKQAEWEVNSVEQQINLQNMQIKAANKRLEQVEAQQQQAMAL).

As to quaternary structure, semipurified toxin complex consists of at least YenA1-YenA2-YenB-YenC1-YenC2-Chi1-Chi2. The Yen-TC:K9 subcomplex is about 26 nm tall and 22 nm in diameter with 5-fold symmetry and 5 copies of YenA1, YenA2, Chi1 and Chi2; the chitinase subunits may be solvent accessible on the exterior the complex. The Yen-TC:K9 subcomplex has no insecticidal activity. The native complex with additional YenB, YenC1 and YenC2 subunits is 16 nm taller and is insecticidal; the toxicity-conferring subunits are present at about 1 copy each. In terms of processing, the isolated toxin complex includes 3 peptides starting between residues 768 and 778 of this protein, which might be physiologically relevant.

It localises to the secreted. Part of an orally active toxin complex (TC) with strong insecticidal effects on larvae of the Coleoptera Costelytra zealandica, Acrossidius tasmania and Adoryphorus couloni and some Lepidoptera larvae. The TC has an endochitinase activity. The polypeptide is Toxin subunit YenA2 (Yersinia entomophaga).